Here is a 347-residue protein sequence, read N- to C-terminus: Cytoplasmic tRNA 2-thiolation protein 1 (347 aa).

Residue S200 is modified to Phosphoserine. The disordered stretch occupies residues 315–347 (LAIGKGRRGLDEEGPPREPQPSRPLTSEPVPDF).

The protein belongs to the TtcA family. CTU1/NCS6/ATPBD3 subfamily. In terms of assembly, component of a complex at least composed of URM1, CTU2/NCS2 and CTU1/ATPBD3. May form a heterodimer with CTU2/NCS2.

It localises to the cytoplasm. The protein operates within tRNA modification; 5-methoxycarbonylmethyl-2-thiouridine-tRNA biosynthesis. In terms of biological role, plays a central role in 2-thiolation of mcm(5)S(2)U at tRNA wobble positions of tRNA(Lys), tRNA(Glu) and tRNA(Gln). Directly binds tRNAs and probably acts by catalyzing adenylation of tRNAs, an intermediate required for 2-thiolation. It is unclear whether it acts as a sulfurtransferase that transfers sulfur from thiocarboxylated URM1 onto the uridine of tRNAs at wobble position. This Bos taurus (Bovine) protein is Cytoplasmic tRNA 2-thiolation protein 1.